Here is a 386-residue protein sequence, read N- to C-terminus: Demethylsterigmatocystin 6-O-methyltransferase (386 aa).

A substrate-binding site is contributed by 137-150 (FDISGPCTQILPDF). The interval 177 to 197 (MFEWMPQHPKHMESLGHLMAL) is substrate binding. Residues 228–229 (GG), D253, 273–274 (NF), and R289 contribute to the S-adenosyl-L-methionine site. The active-site Proton acceptor is the H293.

The protein belongs to the class I-like SAM-binding methyltransferase superfamily. Cation-independent O-methyltransferase family. COMT subfamily.

It catalyses the reaction 6-demethylsterigmatocystin + S-adenosyl-L-methionine = sterigmatocystin + S-adenosyl-L-homocysteine + H(+). Its pathway is mycotoxin biosynthesis; aflatoxin biosynthesis. Functionally, catalyzes both the conversion of demethylsterigmatocystin (DMST) to sterigmatocystin and the conversion of dihydrodemethylsterigmatocystin to dihydrosterigmatocystin (DHDMST) during aflatoxin biosynthesis. The protein is Demethylsterigmatocystin 6-O-methyltransferase (omtB) of Aspergillus flavus (strain ATCC 200026 / FGSC A1120 / IAM 13836 / NRRL 3357 / JCM 12722 / SRRC 167).